The primary structure comprises 85 residues: ATP synthase subunit c (85 aa).

The next 2 membrane-spanning stretches (helical) occupy residues Ile-10–Leu-30 and Phe-53–Phe-73.

It belongs to the ATPase C chain family. F-type ATPases have 2 components, F(1) - the catalytic core - and F(0) - the membrane proton channel. F(1) has five subunits: alpha(3), beta(3), gamma(1), delta(1), epsilon(1). F(0) has three main subunits: a(1), b(2) and c(10-14). The alpha and beta chains form an alternating ring which encloses part of the gamma chain. F(1) is attached to F(0) by a central stalk formed by the gamma and epsilon chains, while a peripheral stalk is formed by the delta and b chains.

Its subcellular location is the cell inner membrane. Its function is as follows. F(1)F(0) ATP synthase produces ATP from ADP in the presence of a proton or sodium gradient. F-type ATPases consist of two structural domains, F(1) containing the extramembraneous catalytic core and F(0) containing the membrane proton channel, linked together by a central stalk and a peripheral stalk. During catalysis, ATP synthesis in the catalytic domain of F(1) is coupled via a rotary mechanism of the central stalk subunits to proton translocation. Key component of the F(0) channel; it plays a direct role in translocation across the membrane. A homomeric c-ring of between 10-14 subunits forms the central stalk rotor element with the F(1) delta and epsilon subunits. The protein is ATP synthase subunit c of Shewanella halifaxensis (strain HAW-EB4).